The chain runs to 153 residues: Small ribosomal subunit protein uS13 (153 aa).

Residues 129 to 153 (RGQRTKSTFRHGSSVGVSRTRPTGN) are disordered. The span at 143–153 (VGVSRTRPTGN) shows a compositional bias: polar residues.

It belongs to the universal ribosomal protein uS13 family. Part of the 30S ribosomal subunit. Forms a loose heterodimer with protein S19. Forms two bridges to the 50S subunit in the 70S ribosome.

Functionally, located at the top of the head of the 30S subunit, it contacts several helices of the 16S rRNA. In the 70S ribosome it contacts the 23S rRNA (bridge B1a) and protein L5 of the 50S subunit (bridge B1b), connecting the 2 subunits; these bridges are implicated in subunit movement. The sequence is that of Small ribosomal subunit protein uS13 from Methanosphaera stadtmanae (strain ATCC 43021 / DSM 3091 / JCM 11832 / MCB-3).